The chain runs to 317 residues: Pantothenate kinase (317 aa).

95 to 102 contributes to the ATP binding site; it reads GSVAVGKS.

It belongs to the prokaryotic pantothenate kinase family.

The protein localises to the cytoplasm. The enzyme catalyses (R)-pantothenate + ATP = (R)-4'-phosphopantothenate + ADP + H(+). It participates in cofactor biosynthesis; coenzyme A biosynthesis; CoA from (R)-pantothenate: step 1/5. The sequence is that of Pantothenate kinase from Myxococcus xanthus (strain DK1622).